A 223-amino-acid chain; its full sequence is Ubiquitin carboxyl-terminal hydrolase isozyme L1 (223 aa).

Met-1 carries the N-acetylmethionine modification. In terms of domain architecture, UCH catalytic spans 2–221 (QLKPMEINPE…VRFSAVALCK (220 aa)). Residues 5–10 (PMEINP) form an interaction with ubiquitin region. The active-site Nucleophile is Cys-90. Ser-125 bears the Phosphoserine mark. The Proton donor role is filled by His-161. An interaction with ubiquitin region spans residues 211–216 (EVRFSA). Cys-220 carries the S-farnesyl cysteine lipid modification. Positions 221-223 (KCA) are cleaved as a propeptide — removed in mature form.

The protein belongs to the peptidase C12 family. As to quaternary structure, monomer. Homodimer. Interacts with COPS5 and SNCA. Post-translationally, O-glycosylated.

It localises to the cytoplasm. The protein resides in the endoplasmic reticulum membrane. The catalysed reaction is Thiol-dependent hydrolysis of ester, thioester, amide, peptide and isopeptide bonds formed by the C-terminal Gly of ubiquitin (a 76-residue protein attached to proteins as an intracellular targeting signal).. Functionally, ubiquitin-protein hydrolase involved both in the processing of ubiquitin precursors and of ubiquitinated proteins. This enzyme is a thiol protease that recognizes and hydrolyzes a peptide bond at the C-terminal glycine of ubiquitin. Also binds to free monoubiquitin and may prevent its degradation in lysosomes. The homodimer may have ATP-independent ubiquitin ligase activity. The polypeptide is Ubiquitin carboxyl-terminal hydrolase isozyme L1 (UCHL1) (Monodelphis domestica (Gray short-tailed opossum)).